Consider the following 319-residue polypeptide: Olfactory receptor 2S2 (319 aa).

Over 1-26 (MEKANETSPVMGFVLLRLSAHPELEK) the chain is Extracellular. N-linked (GlcNAc...) asparagine glycosylation occurs at asparagine 5. Residues 27–50 (TFFVLILLMYLVILLGNGVLILVT) form a helical membrane-spanning segment. Over 51 to 58 (ILDSRLHT) the chain is Cytoplasmic. A helical membrane pass occupies residues 59–80 (PMYFFLGNLSFLDICFTTSSVP). The Extracellular segment spans residues 81-101 (LVLDSFLTPQETISFSACAVQ). An intrachain disulfide couples cysteine 98 to cysteine 190. A helical transmembrane segment spans residues 102–121 (MALSFAMAGTECLLLSMMAF). The Cytoplasmic portion of the chain corresponds to 122-140 (DRYVAICNPLRYSVIMSKA). The chain crosses the membrane as a helical span at residues 141–159 (AYMPMAASSWAIGGAASVV). Topologically, residues 160 to 196 (HTSLAIQLPFCGDNVINHFTCEILAVLKLACADISIN) are extracellular. Residues 197-220 (VISMEVTNVIFLGVPVLFISFSYV) traverse the membrane as a helical segment. The Cytoplasmic segment spans residues 221–237 (FIITTILRIPSAEGRKK). The helical transmembrane segment at 238-260 (VFSTCSAHLTVVIVFYGTLFFMY) threads the bilayer. Residues 261 to 279 (GKPKSKDSMGADKEDLSDK) are Extracellular-facing. A helical transmembrane segment spans residues 280–299 (LIPLFYGVVTPMLNPIIYSL). The Cytoplasmic portion of the chain corresponds to 300 to 319 (RNKDVKAAVRRLLRPKGFTQ).

Belongs to the G-protein coupled receptor 1 family.

The protein localises to the cell membrane. Its function is as follows. Odorant receptor. This chain is Olfactory receptor 2S2 (OR2S2), found in Homo sapiens (Human).